Here is a 128-residue protein sequence, read N- to C-terminus: Probable 4-amino-4-deoxy-L-arabinose-phosphoundecaprenol flippase subunit ArnF (128 aa).

Topologically, residues 1-5 are cytoplasmic; sequence MKGYG. Residues 6–26 form a helical membrane-spanning segment; the sequence is WGIGSVVLVTVAQLILKWGMM. The Periplasmic segment spans residues 27 to 47; that stretch reads NTPLMSLADINGQFVFNHLPQ. Residues 48 to 68 form a helical membrane-spanning segment; sequence FIAVICGLAGYALSMLCWFFA. At 69 to 77 the chain is on the cytoplasmic side; sequence LRYLPLNRA. A helical membrane pass occupies residues 78-98; the sequence is YPLLSLSYALVYLGAVSLPWF. Residues 99–101 are Periplasmic-facing; the sequence is SES. A helical membrane pass occupies residues 102 to 122; the sequence is ATLLKTLGAGFILLGIWLINT. Topologically, residues 123–128 are cytoplasmic; sequence KPIAKD.

It belongs to the ArnF family. In terms of assembly, heterodimer of ArnE and ArnF.

Its subcellular location is the cell inner membrane. Its pathway is bacterial outer membrane biogenesis; lipopolysaccharide biosynthesis. Its function is as follows. Translocates 4-amino-4-deoxy-L-arabinose-phosphoundecaprenol (alpha-L-Ara4N-phosphoundecaprenol) from the cytoplasmic to the periplasmic side of the inner membrane. This is Probable 4-amino-4-deoxy-L-arabinose-phosphoundecaprenol flippase subunit ArnF from Yersinia enterocolitica serotype O:8 / biotype 1B (strain NCTC 13174 / 8081).